Reading from the N-terminus, the 318-residue chain is UDP-3-O-acylglucosamine N-acyltransferase 1 (318 aa).

His230 serves as the catalytic Proton acceptor.

This sequence belongs to the transferase hexapeptide repeat family. LpxD subfamily. As to quaternary structure, homotrimer.

It carries out the reaction a UDP-3-O-[(3R)-3-hydroxyacyl]-alpha-D-glucosamine + a (3R)-hydroxyacyl-[ACP] = a UDP-2-N,3-O-bis[(3R)-3-hydroxyacyl]-alpha-D-glucosamine + holo-[ACP] + H(+). The protein operates within bacterial outer membrane biogenesis; LPS lipid A biosynthesis. Catalyzes the N-acylation of UDP-3-O-acylglucosamine using 3-hydroxyacyl-ACP as the acyl donor. Is involved in the biosynthesis of lipid A, a phosphorylated glycolipid that anchors the lipopolysaccharide to the outer membrane of the cell. This is UDP-3-O-acylglucosamine N-acyltransferase 1 from Sulfurimonas denitrificans (strain ATCC 33889 / DSM 1251) (Thiomicrospira denitrificans (strain ATCC 33889 / DSM 1251)).